A 276-amino-acid polypeptide reads, in one-letter code: N-acyl homoserine lactonase AiiB (276 aa).

The Zn(2+) site is built by histidine 111, histidine 113, histidine 116, histidine 191, aspartate 213, and histidine 259.

It belongs to the metallo-beta-lactamase superfamily. Zn(2+) serves as cofactor.

The enzyme catalyses an N-acyl-L-homoserine lactone + H2O = an N-acyl-L-homoserine + H(+). The polypeptide is N-acyl homoserine lactonase AiiB (Rhizobium rhizogenes (strain K84 / ATCC BAA-868) (Agrobacterium radiobacter)).